The following is a 591-amino-acid chain: Lipoprotein LpqB (591 aa).

Residues Met1 to Gly20 form the signal peptide. The N-palmitoyl cysteine moiety is linked to residue Cys21. A lipid anchor (S-diacylglycerol cysteine) is attached at Cys21.

This sequence belongs to the LpqB lipoprotein family.

Its subcellular location is the cell membrane. This chain is Lipoprotein LpqB, found in Cutibacterium acnes (strain DSM 16379 / KPA171202) (Propionibacterium acnes).